Reading from the N-terminus, the 429-residue chain is Glutamate-1-semialdehyde 2,1-aminomutase (429 aa).

The residue at position 270 (Lys-270) is an N6-(pyridoxal phosphate)lysine.

It belongs to the class-III pyridoxal-phosphate-dependent aminotransferase family. HemL subfamily. In terms of assembly, homodimer. It depends on pyridoxal 5'-phosphate as a cofactor.

Its subcellular location is the cytoplasm. The enzyme catalyses (S)-4-amino-5-oxopentanoate = 5-aminolevulinate. The protein operates within porphyrin-containing compound metabolism; protoporphyrin-IX biosynthesis; 5-aminolevulinate from L-glutamyl-tRNA(Glu): step 2/2. The polypeptide is Glutamate-1-semialdehyde 2,1-aminomutase (Cupriavidus pinatubonensis (strain JMP 134 / LMG 1197) (Cupriavidus necator (strain JMP 134))).